The sequence spans 848 residues: DNA mismatch repair protein MutS (848 aa).

Residue G610–S617 coordinates ATP.

Belongs to the DNA mismatch repair MutS family.

This protein is involved in the repair of mismatches in DNA. It is possible that it carries out the mismatch recognition step. This protein has a weak ATPase activity. This is DNA mismatch repair protein MutS from Francisella philomiragia subsp. philomiragia (strain ATCC 25017 / CCUG 19701 / FSC 153 / O#319-036).